The chain runs to 218 residues: Small ribosomal subunit protein uS3 (218 aa).

The 69-residue stretch at 38–106 (VREYINKRLQ…RVHINIVEIK (69 aa)) folds into the KH type-2 domain.

The protein belongs to the universal ribosomal protein uS3 family. As to quaternary structure, part of the 30S ribosomal subunit. Forms a tight complex with proteins S10 and S14.

Functionally, binds the lower part of the 30S subunit head. Binds mRNA in the 70S ribosome, positioning it for translation. The sequence is that of Small ribosomal subunit protein uS3 from Geobacillus thermodenitrificans (strain NG80-2).